Consider the following 380-residue polypeptide: Shedu protein SduA (380 aa).

In terms of biological role, only component of antiviral defense system Shedu. Expression of Shedu in B.subtilis (strain BEST7003) confers resistance to phages phi105, phi29, rho14 and to a lesser extent to SPP1. May be an endonuclease. In Bacillus cereus (strain B4264), this protein is Shedu protein SduA.